Here is a 197-residue protein sequence, read N- to C-terminus: dITP/XTP pyrophosphatase (197 aa).

A substrate-binding site is contributed by 9-14 (SNNAGK). The active-site Proton acceptor is the D70. Residue D70 participates in Mg(2+) binding. Residues S71, 153 to 156 (FGYD), K176, and 181 to 182 (HR) each bind substrate.

This sequence belongs to the HAM1 NTPase family. As to quaternary structure, homodimer. Requires Mg(2+) as cofactor.

The catalysed reaction is XTP + H2O = XMP + diphosphate + H(+). It carries out the reaction dITP + H2O = dIMP + diphosphate + H(+). It catalyses the reaction ITP + H2O = IMP + diphosphate + H(+). Functionally, pyrophosphatase that catalyzes the hydrolysis of nucleoside triphosphates to their monophosphate derivatives, with a high preference for the non-canonical purine nucleotides XTP (xanthosine triphosphate), dITP (deoxyinosine triphosphate) and ITP. Seems to function as a house-cleaning enzyme that removes non-canonical purine nucleotides from the nucleotide pool, thus preventing their incorporation into DNA/RNA and avoiding chromosomal lesions. The sequence is that of dITP/XTP pyrophosphatase from Chromobacterium violaceum (strain ATCC 12472 / DSM 30191 / JCM 1249 / CCUG 213 / NBRC 12614 / NCIMB 9131 / NCTC 9757 / MK).